Here is a 153-residue protein sequence, read N- to C-terminus: Histone H2B.3 (153 aa).

Basic and acidic residues-rich tracts occupy residues 1–10 (MAPKKDEKPA) and 20–54 (AKAE…GEKK). Positions 1-60 (MAPKKDEKPATAEAGAEAPAKAEAKPKAEKAGKKAKKEPAKKAAKEPKGDGEKKDKKKKK) are disordered. 2 positions are modified to N6-acetyllysine: Lys41 and Lys42. Lys149 is covalently cross-linked (Glycyl lysine isopeptide (Lys-Gly) (interchain with G-Cter in ubiquitin)).

It belongs to the histone H2B family. The nucleosome is a histone octamer containing two molecules each of H2A, H2B, H3 and H4 assembled in one H3-H4 heterotetramer and two H2A-H2B heterodimers. The octamer wraps approximately 147 bp of DNA. Post-translationally, the N-terminus is blocked. In terms of processing, can be acetylated to form H2BK33ac and H2BK34ac. Acetylated mainly on the ubiquitinated form. Monoubiquitinated to form H2BK143ub1; which is increased during the light period and may give a specific tag for epigenetic transcriptional activation.

It is found in the nucleus. The protein resides in the chromosome. Core component of nucleosome. Nucleosomes wrap and compact DNA into chromatin, limiting DNA accessibility to the cellular machineries which require DNA as a template. Histones thereby play a central role in transcription regulation, DNA repair, DNA replication and chromosomal stability. DNA accessibility is regulated via a complex set of post-translational modifications of histones, also called histone code, and nucleosome remodeling. This Chlamydomonas reinhardtii (Chlamydomonas smithii) protein is Histone H2B.3.